Here is a 946-residue protein sequence, read N- to C-terminus: DNA ligase 4 (946 aa).

Residues E295, K297, R302, E355, F397, E457, K462, K479, and K481 each contribute to the ATP site. K297 acts as the N6-AMP-lysine intermediate in catalysis. Position 355 (E355) interacts with Mg(2+). E457 lines the Mg(2+) pocket. 2 consecutive BRCT domains span residues 688–787 (HRSD…PSHC) and 845–945 (VPHF…NYRL).

Belongs to the ATP-dependent DNA ligase family. The cofactor is Mg(2+).

The protein localises to the nucleus. It carries out the reaction ATP + (deoxyribonucleotide)n-3'-hydroxyl + 5'-phospho-(deoxyribonucleotide)m = (deoxyribonucleotide)n+m + AMP + diphosphate.. Functionally, DNA ligase involved in DNA non-homologous end joining (NHEJ); required for double-strand break (DSB) repair. The chain is DNA ligase 4 (LIG4) from Candida glabrata (strain ATCC 2001 / BCRC 20586 / JCM 3761 / NBRC 0622 / NRRL Y-65 / CBS 138) (Yeast).